The following is a 303-amino-acid chain: Cell division protein ZipA (303 aa).

Residues 1–6 lie on the Periplasmic side of the membrane; it reads MMQDLR. The chain crosses the membrane as a helical span at residues 7 to 27; the sequence is LILIIVGAIAIIALLLHGLWT. Topologically, residues 28 to 303 are cytoplasmic; sequence SRKERSSLFR…RIRSTLGVQV (276 aa). Disordered regions lie at residues 39–61, 66–85, and 124–159; these read RPVKRHKHDRQNSFVDDSDDEAF, KPYAHKQVKSHQEYKAEPAI, and EQEPQLGLFEFEEQNESERNGSAIEEKSQEAAGEKE. Basic and acidic residues-rich tracts occupy residues 75-85 and 139-159; these read SHQEYKAEPAI and ESERNGSAIEEKSQEAAGEKE.

The protein belongs to the ZipA family. Interacts with FtsZ via their C-terminal domains.

It localises to the cell inner membrane. Its function is as follows. Essential cell division protein that stabilizes the FtsZ protofilaments by cross-linking them and that serves as a cytoplasmic membrane anchor for the Z ring. Also required for the recruitment to the septal ring of downstream cell division proteins. The protein is Cell division protein ZipA of Photorhabdus laumondii subsp. laumondii (strain DSM 15139 / CIP 105565 / TT01) (Photorhabdus luminescens subsp. laumondii).